A 176-amino-acid polypeptide reads, in one-letter code: ADP-ribosylation factor-like protein 11 (176 aa).

A lipid anchor (N-myristoyl glycine) is attached at G2. GTP is bound by residues G19 to T26, D63 to Q67, and N122 to E125.

Belongs to the small GTPase superfamily. Arf family.

May play a role in apoptosis. May act as a tumor suppressor. The polypeptide is ADP-ribosylation factor-like protein 11 (Arl11) (Mus musculus (Mouse)).